Reading from the N-terminus, the 249-residue chain is Indole-3-glycerol phosphate synthase (249 aa).

Belongs to the TrpC family.

It carries out the reaction 1-(2-carboxyphenylamino)-1-deoxy-D-ribulose 5-phosphate + H(+) = (1S,2R)-1-C-(indol-3-yl)glycerol 3-phosphate + CO2 + H2O. It participates in amino-acid biosynthesis; L-tryptophan biosynthesis; L-tryptophan from chorismate: step 4/5. This chain is Indole-3-glycerol phosphate synthase, found in Pyrobaculum arsenaticum (strain DSM 13514 / JCM 11321 / PZ6).